Consider the following 313-residue polypeptide: Olfactory receptor 8C8 (313 aa).

Over 1–27 the chain is Extracellular; that stretch reads MMQITMENKSSVSEFILMGLTDQPELQ. N-linked (GlcNAc...) asparagine glycosylation is present at asparagine 8. A helical membrane pass occupies residues 28–48; it reads LPLFVLFLMNYTATVMGNLTL. At 49–59 the chain is on the cytoplasmic side; it reads MNLICLNSNLH. The chain crosses the membrane as a helical span at residues 60 to 80; it reads TPMYFFLFNLSFIDFCYSMVF. The Extracellular segment spans residues 81 to 96; sequence TPKMLMSFILEKNTIS. Residues 97-117 traverse the membrane as a helical segment; that stretch reads FGGCMAQLFFFLFFVNSESYV. A disulfide bond links cysteine 100 and cysteine 192. The Cytoplasmic segment spans residues 118–136; the sequence is LTAMAYDRYVAICKPLTYK. Residues 137–157 form a helical membrane-spanning segment; the sequence is VIMSPKICCLLIFSSYLMGFA. Residues 158-208 lie on the Extracellular side of the membrane; that stretch reads SAMAHTGCMIRLSFCDSNIINHYMCDIFPLLPLSCSSTYVNELMSSVVVGS. Residues 209 to 229 form a helical membrane-spanning segment; it reads AIILCCLIILISYAMILFNII. The Cytoplasmic segment spans residues 230–239; that stretch reads HMSSGKGWSK. A helical membrane pass occupies residues 240-260; that stretch reads ALGTCGSHIITVSLFYGSGLL. The Extracellular segment spans residues 261–274; sequence AYVKPSSAKTVGQG. A helical transmembrane segment spans residues 275–295; that stretch reads KFFSVFYTLLVPMLNPLIYSL. The Cytoplasmic segment spans residues 296 to 313; that stretch reads RNKDVKLAVKKTWKRITS.

Belongs to the G-protein coupled receptor 1 family. Expressed in neurons in the olfactory epithelium.

The protein localises to the cell membrane. Its function is as follows. Potential odorant receptor. In Mus musculus (Mouse), this protein is Olfactory receptor 8C8.